We begin with the raw amino-acid sequence, 129 residues long: Small ribosomal subunit protein uS11 (129 aa).

It belongs to the universal ribosomal protein uS11 family. Part of the 30S ribosomal subunit. Interacts with proteins S7 and S18. Binds to IF-3.

In terms of biological role, located on the platform of the 30S subunit, it bridges several disparate RNA helices of the 16S rRNA. Forms part of the Shine-Dalgarno cleft in the 70S ribosome. The protein is Small ribosomal subunit protein uS11 of Methylocella silvestris (strain DSM 15510 / CIP 108128 / LMG 27833 / NCIMB 13906 / BL2).